The chain runs to 166 residues: Large ribosomal subunit protein uL10 (166 aa).

The protein belongs to the universal ribosomal protein uL10 family. In terms of assembly, part of the ribosomal stalk of the 50S ribosomal subunit. The N-terminus interacts with L11 and the large rRNA to form the base of the stalk. The C-terminus forms an elongated spine to which L12 dimers bind in a sequential fashion forming a multimeric L10(L12)X complex.

Functionally, forms part of the ribosomal stalk, playing a central role in the interaction of the ribosome with GTP-bound translation factors. In Listeria innocua serovar 6a (strain ATCC BAA-680 / CLIP 11262), this protein is Large ribosomal subunit protein uL10.